A 688-amino-acid chain; its full sequence is Pescadillo homolog (688 aa).

The 120-residue stretch at 351-470 folds into the BRCT domain; the sequence is EVASLFASFT…KLLRHDLYAP (120 aa). Disordered stretches follow at residues 411–442 and 496–688; these read RPPL…GTRM and AEQE…TKGR. Pro residues predominate over residues 412-424; the sequence is PPLPESALPPLPQ. Residues 496 to 536 are a coiled coil; sequence AEQESDGEAERQAEEENEEEESEVEGLSMDKEMVETENSEA. Composition is skewed to acidic residues over residues 510–519, 530–544, 554–565, and 576–589; these read EENEEEESEV, ETEN…EESV, GSDDEEEESEED, and EAAD…DDEE. Over residues 619 to 634 the composition is skewed to basic residues; the sequence is KKSKKQKPLAKKHAAQ. Residues 627–686 are a coiled coil; the sequence is LAKKHAAQKKKEQEELERQKMMMSRKKRKLLDKMLYSNKKKDEEAEKLRRKRRKIEQGTK. Residues 635 to 646 are compositionally biased toward basic and acidic residues; it reads KKKEQEELERQK.

Belongs to the pescadillo family. In terms of assembly, component of the NOP7 complex, composed of ERB1, NOP7 and YTM1. The complex is held together by ERB1, which interacts with NOP7 via its N-terminal domain and with YTM1 via a high-affinity interaction between the seven-bladed beta-propeller domains of the 2 proteins. The NOP7 complex associates with the 66S pre-ribosome.

The protein resides in the nucleus. It localises to the nucleolus. Its subcellular location is the nucleoplasm. Component of the NOP7 complex, which is required for maturation of the 25S and 5.8S ribosomal RNAs and formation of the 60S ribosome. The sequence is that of Pescadillo homolog from Coccidioides immitis (strain RS) (Valley fever fungus).